We begin with the raw amino-acid sequence, 204 residues long: Methylthioribulose-1-phosphate dehydratase (204 aa).

2 residues coordinate Zn(2+): histidine 94 and histidine 96.

The protein belongs to the aldolase class II family. MtnB subfamily. Zn(2+) is required as a cofactor.

It carries out the reaction 5-(methylsulfanyl)-D-ribulose 1-phosphate = 5-methylsulfanyl-2,3-dioxopentyl phosphate + H2O. It functions in the pathway amino-acid biosynthesis; L-methionine biosynthesis via salvage pathway; L-methionine from S-methyl-5-thio-alpha-D-ribose 1-phosphate: step 2/6. Catalyzes the dehydration of methylthioribulose-1-phosphate (MTRu-1-P) into 2,3-diketo-5-methylthiopentyl-1-phosphate (DK-MTP-1-P). In Enterobacter sp. (strain 638), this protein is Methylthioribulose-1-phosphate dehydratase.